Here is a 332-residue protein sequence, read N- to C-terminus: MEQWLESAPGWTNVAVFFGLGALLLLVVLGFVTYAILAERKVMGFMQGRIGPNQVGGRLGLLQTVADVLKLLLKEDTIPKAADRPLYVLAPIIAFTPSFMVLAALPFTDAFRFADIGVGLLYYIAVSGLTTIGVVTGGWASNNKYALLGGMRAAAQMISYEIPLVMSALGVVLLAGSMNLVDIVTAQDNVWFIFAQPLAFLIFFIAAVAELNRVPFDLPEAESELVSGFHVEYSGFRWAFFMLAEYVYLFAMAALITILFLGGWHPVAFLGWIPGSVWFALKFCAIVYVLIWFRATFPRVRADQLMEFAWKVLLPLSLVNIVLTAVIKSLFF.

Transmembrane regions (helical) follow at residues 16 to 36 (VFFG…TYAI), 87 to 107 (YVLA…ALPF), 116 to 136 (IGVG…GVVT), 164 to 184 (LVMS…VDIV), 190 to 210 (VWFI…AVAE), 231 to 251 (VEYS…YLFA), 253 to 273 (AALI…LGWI), 277 to 297 (VWFA…RATF), and 312 to 332 (VLLP…SLFF).

This sequence belongs to the complex I subunit 1 family. As to quaternary structure, NDH-1 is composed of 14 different subunits. Subunits NuoA, H, J, K, L, M, N constitute the membrane sector of the complex.

It is found in the cell membrane. It catalyses the reaction a quinone + NADH + 5 H(+)(in) = a quinol + NAD(+) + 4 H(+)(out). In terms of biological role, NDH-1 shuttles electrons from NADH, via FMN and iron-sulfur (Fe-S) centers, to quinones in the respiratory chain. The immediate electron acceptor for the enzyme in this species is believed to be ubiquinone. Couples the redox reaction to proton translocation (for every two electrons transferred, four hydrogen ions are translocated across the cytoplasmic membrane), and thus conserves the redox energy in a proton gradient. This subunit may bind ubiquinone. The chain is NADH-quinone oxidoreductase subunit H from Geobacillus thermodenitrificans (strain NG80-2).